The following is a 433-amino-acid chain: uncharacterized protein (433 aa).

A methylglyoxal synthase region spans residues 1 to 126; sequence MAAHIALIAH…VIKLLGKTKT (126 aa). The MGS-like domain occupies 1–145; sequence MAAHIALIAH…GQGNVERELD (145 aa). Residue aspartate 62 is part of the active site. The DAGKc domain occupies 127-262; it reads GHLIFNPVAG…VDTALCNDIP (136 aa).

It in the N-terminal section; belongs to the methylglyoxal synthase family.

This is an uncharacterized protein from Synechocystis sp. (strain ATCC 27184 / PCC 6803 / Kazusa).